We begin with the raw amino-acid sequence, 498 residues long: NADH-quinone oxidoreductase subunit N (498 aa).

The next 14 membrane-spanning stretches (helical) occupy residues 10–30 (LMPL…MLLI), 44–64 (VVGL…GKFV), 68–88 (VMGM…ILVA), 109–129 (ELYL…ASSH), 130–150 (YASF…LLAY), 164–184 (YLVL…YIYA), 207–227 (VLLG…LAPF), 239–259 (PAPM…GLFV), 273–293 (LVTV…LLAV), 301–321 (ILGY…ISMT), 328–348 (VTVY…AVAL), 377–397 (ATLT…GFIG), 412–434 (FLAA…VMVV), and 458–478 (LMVL…DPMI).

This sequence belongs to the complex I subunit 2 family. As to quaternary structure, NDH-1 is composed of 14 different subunits. Subunits NuoA, H, J, K, L, M, N constitute the membrane sector of the complex.

It is found in the cell inner membrane. It carries out the reaction a quinone + NADH + 5 H(+)(in) = a quinol + NAD(+) + 4 H(+)(out). Its function is as follows. NDH-1 shuttles electrons from NADH, via FMN and iron-sulfur (Fe-S) centers, to quinones in the respiratory chain. The immediate electron acceptor for the enzyme in this species is believed to be ubiquinone. Couples the redox reaction to proton translocation (for every two electrons transferred, four hydrogen ions are translocated across the cytoplasmic membrane), and thus conserves the redox energy in a proton gradient. In Acinetobacter baumannii (strain AB0057), this protein is NADH-quinone oxidoreductase subunit N.